A 728-amino-acid chain; its full sequence is MHSSSKSQAFSLTFLLFLFLLPSVSESQLISSESRTLLEIQKHLQYPPTLRSWSNWTNFCYLPSSPSFKILCFNGHVTELTVTGNRTVKLPGRFSSDSLFTVLTKLSNLKTLSLVSLGISGPLPSQIIRLSSSLQSLNLSSNFISGNIPKEISSLKNLRSLVLANNLFNGSVPDLRGLSNLQELNLGGNKLGPEVVPSLASNLITISLKNNSFGSKIPEQIKKLNKLQSLDLSSNKFTGSIPRFLLSLPSLQNLSLAQNLLSGSLPNSSLCNSKLRILDVSRNLLTGKLPSCFSSKKQTVLLFTFNCLSINGSPSAKYQRPVTFCENEAKQAVAAVKSDTKDKERKEEDTGIELGLVIGIIIGVILVSAVLAGLVLVRMRKSRSKEEPLEANNVDQVTVCSNTTRSTTSKTVPDLRRVPQTMRSAVIGLSPYRVFSLEELEEATNNFDAENLCGEQLYKGCLREGIAVTVRCIKLKQKNSTQNLAQQMEVLSKLRHMHLVSVLGHCIGTYQDHHPYAGSTIFIVQEYISNGSLRDYLTDWRKKEVLKWPQRMSIAIGVARGIQFLHTGVAPGIFGNNLEIENVLLDETLTVKLSGYSIPLPSKVGAESPSNEDGEKEDVYQFGVILIQIITGKVIAAASSELGSLKLQLENSLRDEPSVLRSLADPCVRGTYAYESLRTTVEFAINCLCEDQRKRPSIEDVVWNLQYTIQVQQGWTSSENLGLGGSEL.

The first 27 residues, 1 to 27 (MHSSSKSQAFSLTFLLFLFLLPSVSES), serve as a signal peptide directing secretion. The Extracellular portion of the chain corresponds to 28-356 (QLISSESRTL…EEDTGIELGL (329 aa)). 2 N-linked (GlcNAc...) asparagine glycosylation sites follow: asparagine 55 and asparagine 85. LRR repeat units lie at residues 74-96 (NGHVTELTVTGNRTVKLPGRFSS), 106-130 (LSNLKTLSLVSLGISGPLPSQIIRL), 131-155 (SSSLQSLNLSSNFISGNIPKEISSL), 157-178 (NLRSLVLANNLFNGSVPDLRGL), 179-202 (SNLQELNLGGNKLGPEVVPSLASN), 204-224 (ITISLKNNSFGSKIPEQIKKL), 225-248 (NKLQSLDLSSNKFTGSIPRFLLSL), 249-272 (PSLQNLSLAQNLLSGSLPNSSLCN), and 274-295 (KLRILDVSRNLLTGKLPSCFSS). Asparagine 138 and asparagine 169 each carry an N-linked (GlcNAc...) asparagine glycan. A glycan (N-linked (GlcNAc...) asparagine) is linked at asparagine 210. Residues asparagine 253 and asparagine 267 are each glycosylated (N-linked (GlcNAc...) asparagine). A helical membrane pass occupies residues 357–377 (VIGIIIGVILVSAVLAGLVLV). Residues 378 to 728 (RMRKSRSKEE…ENLGLGGSEL (351 aa)) are Cytoplasmic-facing. The Protein kinase domain occupies 421–709 (TMRSAVIGLS…DVVWNLQYTI (289 aa)).

This sequence belongs to the protein kinase superfamily. Ser/Thr protein kinase family.

It is found in the membrane. It catalyses the reaction L-seryl-[protein] + ATP = O-phospho-L-seryl-[protein] + ADP + H(+). The enzyme catalyses L-threonyl-[protein] + ATP = O-phospho-L-threonyl-[protein] + ADP + H(+). The polypeptide is Probable LRR receptor-like serine/threonine-protein kinase At1g14390 (Arabidopsis thaliana (Mouse-ear cress)).